A 225-amino-acid polypeptide reads, in one-letter code: F-box protein SKIP27 (225 aa).

Residues 121–169 (KSRLECLPQDLLIRVICGVDHEDLKSLKLVSKSIREASLVAKTLHFAYT) form the F-box domain.

As to quaternary structure, part of a SCF (ASK-cullin-F-box) protein ligase complex. Interacts with SKP1A/ASK1 and SPK1B/ASK2.

Its subcellular location is the nucleus. The protein operates within protein modification; protein ubiquitination. Functionally, component of SCF(ASK-cullin-F-box) E3 ubiquitin ligase complexes, which may mediate the ubiquitination and subsequent proteasomal degradation of target proteins. This Arabidopsis thaliana (Mouse-ear cress) protein is F-box protein SKIP27 (SKIP27).